Here is a 174-residue protein sequence, read N- to C-terminus: Ribosome maturation factor RimM (174 aa).

The PRC barrel domain maps to 96-169 (KDTFFICDLI…KMVVDLPQGL (74 aa)).

This sequence belongs to the RimM family. In terms of assembly, binds ribosomal protein uS19.

The protein localises to the cytoplasm. Its function is as follows. An accessory protein needed during the final step in the assembly of 30S ribosomal subunit, possibly for assembly of the head region. Essential for efficient processing of 16S rRNA. May be needed both before and after RbfA during the maturation of 16S rRNA. It has affinity for free ribosomal 30S subunits but not for 70S ribosomes. In Acetivibrio thermocellus (strain ATCC 27405 / DSM 1237 / JCM 9322 / NBRC 103400 / NCIMB 10682 / NRRL B-4536 / VPI 7372) (Clostridium thermocellum), this protein is Ribosome maturation factor RimM.